The primary structure comprises 220 residues: UPF0758 protein Asuc_0013 (220 aa).

The MPN domain maps to Glu98–Leu220. Residues His169, His171, and Asp182 each contribute to the Zn(2+) site. The JAMM motif motif lies at His169–Asp182.

This sequence belongs to the UPF0758 family.

The sequence is that of UPF0758 protein Asuc_0013 from Actinobacillus succinogenes (strain ATCC 55618 / DSM 22257 / CCUG 43843 / 130Z).